The chain runs to 102 residues: Monothiol glutaredoxin-S9 (102 aa).

In terms of domain architecture, Glutaredoxin spans 1 to 101 (MDKVVRMSSE…PLVKPFQANL (101 aa)). Cys-21 contributes to the [2Fe-2S] cluster binding site.

It belongs to the glutaredoxin family. CC-type subfamily.

Its subcellular location is the cytoplasm. May only reduce GSH-thiol disulfides, but not protein disulfides. This is Monothiol glutaredoxin-S9 (GRXS9) from Arabidopsis thaliana (Mouse-ear cress).